We begin with the raw amino-acid sequence, 299 residues long: GTPase Era (299 aa).

In terms of domain architecture, Era-type G spans 2 to 170 (KTGFVALAGK…LDLIIENLPE (169 aa)). Residues 10 to 17 (GKPNVGKS) form a G1 region. Position 10-17 (10-17 (GKPNVGKS)) interacts with GTP. The G2 stretch occupies residues 36–40 (QTTRN). The interval 57 to 60 (DTPG) is G3. GTP contacts are provided by residues 57–61 (DTPGI) and 119–122 (NKID). The segment at 119–122 (NKID) is G4. Residues 149–151 (TSA) form a G5 region. The region spanning 201–278 (TYEEIPHSVA…FLDLHVKVKR (78 aa)) is the KH type-2 domain.

The protein belongs to the TRAFAC class TrmE-Era-EngA-EngB-Septin-like GTPase superfamily. Era GTPase family. In terms of assembly, monomer.

Its subcellular location is the cytoplasm. It localises to the cell inner membrane. In terms of biological role, an essential GTPase that binds both GDP and GTP, with rapid nucleotide exchange. Plays a role in 16S rRNA processing and 30S ribosomal subunit biogenesis and possibly also in cell cycle regulation and energy metabolism. The protein is GTPase Era of Thermosipho melanesiensis (strain DSM 12029 / CIP 104789 / BI429).